A 264-amino-acid polypeptide reads, in one-letter code: Thymidylate synthase (264 aa).

R21 is a binding site for dUMP. H51 lines the (6R)-5,10-methylene-5,6,7,8-tetrahydrofolate pocket. 126–127 contacts dUMP; that stretch reads RR. C146 serves as the catalytic Nucleophile. Residues 166 to 169, N177, and 207 to 209 contribute to the dUMP site; these read RSCD and HLY. D169 provides a ligand contact to (6R)-5,10-methylene-5,6,7,8-tetrahydrofolate. Residue S263 participates in (6R)-5,10-methylene-5,6,7,8-tetrahydrofolate binding.

Belongs to the thymidylate synthase family. Bacterial-type ThyA subfamily. Homodimer.

The protein resides in the cytoplasm. It catalyses the reaction dUMP + (6R)-5,10-methylene-5,6,7,8-tetrahydrofolate = 7,8-dihydrofolate + dTMP. It participates in pyrimidine metabolism; dTTP biosynthesis. Catalyzes the reductive methylation of 2'-deoxyuridine-5'-monophosphate (dUMP) to 2'-deoxythymidine-5'-monophosphate (dTMP) while utilizing 5,10-methylenetetrahydrofolate (mTHF) as the methyl donor and reductant in the reaction, yielding dihydrofolate (DHF) as a by-product. This enzymatic reaction provides an intracellular de novo source of dTMP, an essential precursor for DNA biosynthesis. In Buchnera aphidicola subsp. Schizaphis graminum (strain Sg), this protein is Thymidylate synthase.